The primary structure comprises 107 residues: Toxin MT2730 (107 aa).

The interval methionine 1 to alanine 42 is disordered.

Its function is as follows. Toxic component of a type II toxin-antitoxin (TA) system. Its toxic effect is neutralized by coexpression with cognate antitoxin MT2731. This is Toxin MT2730 from Mycobacterium tuberculosis (strain CDC 1551 / Oshkosh).